Here is a 236-residue protein sequence, read N- to C-terminus: Orotidine 5'-phosphate decarboxylase (236 aa).

Substrate contacts are provided by residues Asp12, Lys34, 60-69 (DLKLHDIPHT), Thr123, Arg184, Gln193, Gly213, and Arg214. Lys62 serves as the catalytic Proton donor.

It belongs to the OMP decarboxylase family. Type 1 subfamily. Homodimer.

It carries out the reaction orotidine 5'-phosphate + H(+) = UMP + CO2. The protein operates within pyrimidine metabolism; UMP biosynthesis via de novo pathway; UMP from orotate: step 2/2. Functionally, catalyzes the decarboxylation of orotidine 5'-monophosphate (OMP) to uridine 5'-monophosphate (UMP). The chain is Orotidine 5'-phosphate decarboxylase from Gluconobacter oxydans (strain 621H) (Gluconobacter suboxydans).